Consider the following 40-residue polypeptide: Protamine-1 (40 aa).

Residues 1 to 40 (MPPRRKRVSSAPRRRRRTYRRTTAHKHQDRPVHRRRRRRH) form a disordered region.

In terms of tissue distribution, testis.

It localises to the nucleus. The protein resides in the chromosome. Its function is as follows. Protamines substitute for histones in the chromatin of sperm during the haploid phase of spermatogenesis. They compact sperm DNA into a highly condensed, stable and inactive complex. The sequence is that of Protamine-1 (PBP1) from Bufo japonicus (Japanese common toad).